Reading from the N-terminus, the 133-residue chain is uncharacterized protein (133 aa).

The signal sequence occupies residues 1 to 23 (MSRKIIPALTIFFGPILILTAIT). Positions 82–133 (ESIKNQNSLNKEKQQQQQQQQQQQQQQQQQQQQQQKPNTPPTPLTTPSTPKK) are disordered. The span at 96–118 (QQQQQQQQQQQQQQQQQQQQQKP) shows a compositional bias: low complexity.

It localises to the secreted. This is an uncharacterized protein from Dictyostelium discoideum (Social amoeba).